Reading from the N-terminus, the 188-residue chain is Cytidylate kinase (188 aa).

7–15 lines the ATP pocket; the sequence is GKIGSGKST.

The protein belongs to the cytidylate kinase family. Type 2 subfamily.

Its subcellular location is the cytoplasm. It carries out the reaction CMP + ATP = CDP + ADP. The catalysed reaction is dCMP + ATP = dCDP + ADP. The polypeptide is Cytidylate kinase (cmk) (Thermoplasma acidophilum (strain ATCC 25905 / DSM 1728 / JCM 9062 / NBRC 15155 / AMRC-C165)).